The chain runs to 266 residues: Indole-3-glycerol phosphate synthase (266 aa).

This sequence belongs to the TrpC family.

It carries out the reaction 1-(2-carboxyphenylamino)-1-deoxy-D-ribulose 5-phosphate + H(+) = (1S,2R)-1-C-(indol-3-yl)glycerol 3-phosphate + CO2 + H2O. Its pathway is amino-acid biosynthesis; L-tryptophan biosynthesis; L-tryptophan from chorismate: step 4/5. This chain is Indole-3-glycerol phosphate synthase, found in Paracidovorax citrulli (strain AAC00-1) (Acidovorax citrulli).